Consider the following 954-residue polypeptide: Bifunctional glutamine synthetase adenylyltransferase/adenylyl-removing enzyme (954 aa).

The adenylyl removase stretch occupies residues 1 to 452; that stretch reads MAVQKDSNKS…HFKATVGGEE (452 aa). The tract at residues 458-954 is adenylyl transferase; it reads EHWTAQLWNV…ILAIYQAILE (497 aa).

It belongs to the GlnE family. The cofactor is Mg(2+).

The enzyme catalyses [glutamine synthetase]-O(4)-(5'-adenylyl)-L-tyrosine + phosphate = [glutamine synthetase]-L-tyrosine + ADP. It carries out the reaction [glutamine synthetase]-L-tyrosine + ATP = [glutamine synthetase]-O(4)-(5'-adenylyl)-L-tyrosine + diphosphate. Its function is as follows. Involved in the regulation of glutamine synthetase GlnA, a key enzyme in the process to assimilate ammonia. When cellular nitrogen levels are high, the C-terminal adenylyl transferase (AT) inactivates GlnA by covalent transfer of an adenylyl group from ATP to specific tyrosine residue of GlnA, thus reducing its activity. Conversely, when nitrogen levels are low, the N-terminal adenylyl removase (AR) activates GlnA by removing the adenylyl group by phosphorolysis, increasing its activity. The regulatory region of GlnE binds the signal transduction protein PII (GlnB) which indicates the nitrogen status of the cell. The sequence is that of Bifunctional glutamine synthetase adenylyltransferase/adenylyl-removing enzyme from Shewanella oneidensis (strain ATCC 700550 / JCM 31522 / CIP 106686 / LMG 19005 / NCIMB 14063 / MR-1).